The primary structure comprises 277 residues: Pristinamycin IIA synthase subunit B (277 aa).

As to quaternary structure, heterodimer of two subunits, SnaA and SnaB. FMN is required as a cofactor.

Its function is as follows. Catalyzes the oxidation of the proline residue of pristinamycin IIB (PIIB) to pristinamycin IIA (PIIA). This is Pristinamycin IIA synthase subunit B (snaB) from Streptomyces pristinaespiralis.